The primary structure comprises 573 residues: Chromosomal replication initiator protein DnaA (573 aa).

Residues 1-85 (MSQNSSSLLE…TKVLSMRMGR (85 aa)) are domain I, interacts with DnaA modulators. The segment at 85–231 (RSFSLAVSVE…TPAHNPNREV (147 aa)) is domain II. Positions 91–232 (VSVEPSRDGE…PAHNPNREVS (142 aa)) are disordered. Low complexity predominate over residues 116–169 (PYPGQGPQSPQGQQGQQGQHPVQQEVRAHAPAPHQQGQHQAAQHQPPANQAPGQ). Over residues 178-191 (QASQSAGAWEQTHS) the composition is skewed to polar residues. Residues 202 to 213 (SPAPVEPPPQPA) show a composition bias toward pro residues. The domain III, AAA+ region stretch occupies residues 232–448 (SLNPKYTFEN…GALIRVSAYS (217 aa)). Residues Gly276, Gly278, Lys279, and Thr280 each contribute to the ATP site. The segment at 449-573 (SLINQPIDKE…TQLIKSRGRN (125 aa)) is domain IV, binds dsDNA.

This sequence belongs to the DnaA family. In terms of assembly, oligomerizes as a right-handed, spiral filament on DNA at oriC.

Its subcellular location is the cytoplasm. In terms of biological role, plays an essential role in the initiation and regulation of chromosomal replication. ATP-DnaA binds to the origin of replication (oriC) to initiate formation of the DNA replication initiation complex once per cell cycle. Binds the DnaA box (a 9 base pair repeat at the origin) and separates the double-stranded (ds)DNA. Forms a right-handed helical filament on oriC DNA; dsDNA binds to the exterior of the filament while single-stranded (ss)DNA is stabiized in the filament's interior. The ATP-DnaA-oriC complex binds and stabilizes one strand of the AT-rich DNA unwinding element (DUE), permitting loading of DNA polymerase. After initiation quickly degrades to an ADP-DnaA complex that is not apt for DNA replication. Binds acidic phospholipids. This is Chromosomal replication initiator protein DnaA from Corynebacterium efficiens (strain DSM 44549 / YS-314 / AJ 12310 / JCM 11189 / NBRC 100395).